We begin with the raw amino-acid sequence, 344 residues long: MDIEAEPSLRSIVNHESLKWIFVGGKGGVGKTTTSSSISIQLALHNPNKKYLLISTDPAHNLSDAFNQKFGKDARQVEGLPNLSCMEIDPDSTLENLQKNNESTFGSAGGNDPLKSMMGDITGSIPGIDEAFSFMEVLKHIGETKENQIKYDTVIFDTAPTGHTLRFLQLPSTLEKLLGKVNELSGRFGPMLNNLLGSQGGQSIDFASKIKEIQVQVTEVNKQFQDPELTTFVCVCISEFLSLYETERLIQELMSYNMDVNSIVINQLLFSDDSECRRCNARWRMQKKYLDQMDELYEDYHLVKMPLLAMEVRGLENLKKFSKYLIEPYNSETDGHVVFDLEEQ.

Residue 26 to 33 (KGGVGKTT) participates in ATP binding. Residue aspartate 57 is part of the active site. Positions 239 and 266 each coordinate ATP. Residues cysteine 276 and cysteine 279 each contribute to the Zn(2+) site.

Belongs to the arsA ATPase family. Homodimer. Component of the Golgi to ER traffic (GET) complex, which is composed of GET1, GET2 and GET3. Within the complex, GET1 and GET2 form a heterotetramer which is stabilized by phosphatidylinositol binding and which binds to the GET3 homodimer. Interacts with the chloride channel protein GEF1.

The protein localises to the cytoplasm. The protein resides in the endoplasmic reticulum. It is found in the golgi apparatus. ATPase required for the post-translational delivery of tail-anchored (TA) proteins to the endoplasmic reticulum. Recognizes and selectively binds the transmembrane domain of TA proteins in the cytosol. This complex then targets to the endoplasmic reticulum by membrane-bound receptors GET1 and GET2, where the tail-anchored protein is released for insertion. This process is regulated by ATP binding and hydrolysis. ATP binding drives the homodimer towards the closed dimer state, facilitating recognition of newly synthesized TA membrane proteins. ATP hydrolysis is required for insertion. Subsequently, the homodimer reverts towards the open dimer state, lowering its affinity for the GET1-GET2 receptor, and returning it to the cytosol to initiate a new round of targeting. Cooperates with the HDEL receptor ERD2 to mediate the ATP-dependent retrieval of resident ER proteins that contain a C-terminal H-D-E-L retention signal from the Golgi to the ER. Involved in low-level resistance to the oxyanions arsenite and arsenate, and in heat tolerance. The protein is ATPase GET3 of Komagataella phaffii (strain GS115 / ATCC 20864) (Yeast).